The following is a 430-amino-acid chain: Histidine--tRNA ligase (430 aa).

This sequence belongs to the class-II aminoacyl-tRNA synthetase family. Homodimer.

It is found in the cytoplasm. It carries out the reaction tRNA(His) + L-histidine + ATP = L-histidyl-tRNA(His) + AMP + diphosphate + H(+). This is Histidine--tRNA ligase (hisS) from Clostridium acetobutylicum (strain ATCC 824 / DSM 792 / JCM 1419 / IAM 19013 / LMG 5710 / NBRC 13948 / NRRL B-527 / VKM B-1787 / 2291 / W).